A 406-amino-acid polypeptide reads, in one-letter code: Renin (406 aa).

Positions 1–23 (MDGWRRMPRWGLLLLLWGSCTFG) are cleaved as a signal peptide. Residues 24–66 (LPTDTTTFKRIFLKRMPSIRESLKERGVDMARLGPEWSQPMKR) constitute a propeptide, activation peptide. Asn-71 is a glycosylation site (N-linked (GlcNAc...) asparagine). A Peptidase A1 domain is found at 86 to 403 (YYGEIGIGTP…DRRNNRIGFA (318 aa)). Asp-104 is a catalytic residue. Residues Cys-117 and Cys-124 are joined by a disulfide bond. Asn-141 carries an N-linked (GlcNAc...) asparagine glycan. Cys-283 and Cys-287 are joined by a disulfide. The active site involves Asp-292. A disulfide bond links Cys-325 and Cys-362.

The protein belongs to the peptidase A1 family. In terms of assembly, interacts with ATP6AP2.

The protein localises to the secreted. It is found in the membrane. It carries out the reaction Cleavage of Leu-|-Xaa bond in angiotensinogen to generate angiotensin I.. Interaction with ATP6AP2 results in a 5-fold increased efficiency in angiotensinogen processing. Functionally, renin is a highly specific endopeptidase, whose only known function is to generate angiotensin I from angiotensinogen in the plasma, initiating a cascade of reactions that produce an elevation of blood pressure and increased sodium retention by the kidney. In Macaca fascicularis (Crab-eating macaque), this protein is Renin (REN).